Consider the following 132-residue polypeptide: Small heat shock protein hspL (132 aa).

Residues 15–131 form the sHSP domain; sequence TFTNFVSAPV…VKMSNNNKVE (117 aa).

It belongs to the small heat shock protein (HSP20) family.

The protein is Small heat shock protein hspL (hspL) of Dictyostelium discoideum (Social amoeba).